The following is a 113-amino-acid chain: Iron-sulfur cluster assembly protein CyaY (113 aa).

The protein belongs to the frataxin family.

Involved in iron-sulfur (Fe-S) cluster assembly. May act as a regulator of Fe-S biogenesis. The chain is Iron-sulfur cluster assembly protein CyaY from Ralstonia nicotianae (strain ATCC BAA-1114 / GMI1000) (Ralstonia solanacearum).